The primary structure comprises 347 residues: Pre-B-cell leukemia transcription factor 1 (347 aa).

The interval 1 to 37 is disordered; sequence MDDQPRLMHSHPGVGMAGHPSLSQHMQDGTGANEGDV. One can recognise a PBC domain in the interval 38–232; it reads GRKQDIGDIL…VMILRSRFLD (195 aa). The segment at 45 to 124 is PBC-A; sequence DILQQIMTIT…EGVAGPEKGG (80 aa). The interval 127-232 is PBC-B; that stretch reads AAAAAAAAAS…VMILRSRFLD (106 aa). The segment at residues 233 to 295 is a DNA-binding region (homeobox; TALE-type); that stretch reads ARRKRRNFNK…NKRIRYKKNI (63 aa). The span at 318–331 shows a compositional bias: polar residues; it reads VHGSQANSPSTPSS. Residues 318-347 are disordered; that stretch reads VHGSQANSPSTPSSAGGYPSPCYQSDRRIQ.

The protein belongs to the TALE/PBX homeobox family. As to quaternary structure, forms a heterodimer with isoform 2 of meis1; the interaction is necessary for neural fate induction. As to expression, shows broad, weak expression from blastula through gastrula stages. At stage 14/15, expressed in a broad arc that gives rise to the forebrain and eyes. More intensely expressed in the lateral neural folds (presumptive neural crest) and as horizontal stripes in the posterior neural plate that give rise to the hindbrain. As development proceeds, expression progresses posteriorly along the neural folds and at stage 21, expression is pronounced in the prospective hindbrain and in migratory neural crest cells. At later stages (stage 26), expression becomes intense within the dorsal portion of the forebrain, and in the optic cup, caudal branchial arch, peripheral to the pronephric anlage, and in the dorsal anterior half of the spinal cord. Expression remains robust in the hindbrain but gradually becomes more restricted. At stage 28, expressed in the dorsal lateral portion of the neural tube and in the somatic layer of the lateral plate mesoderm that surrounds the pronephric anlage.

The protein localises to the nucleus. Its function is as follows. Acts as a transcriptional activator in complex with isoform 2 of meis1, to induce posterior neural and neural crest gene expression, and thereby specify hindbrain and neural crest cell fate. Binds to a highly conserved region in the promoter of the neural crest gene zic3. Required for the nuclear transport or retention of isoform 2 of meis1. The chain is Pre-B-cell leukemia transcription factor 1 (pbx1) from Xenopus laevis (African clawed frog).